A 225-amino-acid chain; its full sequence is ATP synthase F(0) complex subunit a (225 aa).

The next 6 membrane-spanning stretches (helical) occupy residues 10 to 30 (PSLL…ILLL), 69 to 89 (LILI…LLPY), 96 to 116 (QLSM…LIGL), 135 to 155 (LLIP…PIAL), 168 to 188 (LLIQ…PPLS), and 194 to 214 (VLIL…YVFV).

Belongs to the ATPase A chain family. In terms of assembly, component of the ATP synthase complex composed at least of ATP5F1A/subunit alpha, ATP5F1B/subunit beta, ATP5MC1/subunit c (homooctomer), MT-ATP6/subunit a, MT-ATP8/subunit 8, ATP5ME/subunit e, ATP5MF/subunit f, ATP5MG/subunit g, ATP5MK/subunit k, ATP5MJ/subunit j, ATP5F1C/subunit gamma, ATP5F1D/subunit delta, ATP5F1E/subunit epsilon, ATP5PF/subunit F6, ATP5PB/subunit b, ATP5PD/subunit d, ATP5PO/subunit OSCP. ATP synthase complex consists of a soluble F(1) head domain (subunits alpha(3) and beta(3)) - the catalytic core - and a membrane F(0) domain - the membrane proton channel (subunits c, a, 8, e, f, g, k and j). These two domains are linked by a central stalk (subunits gamma, delta, and epsilon) rotating inside the F1 region and a stationary peripheral stalk (subunits F6, b, d, and OSCP). Interacts with DNAJC30; interaction is direct.

It localises to the mitochondrion inner membrane. The catalysed reaction is H(+)(in) = H(+)(out). Its function is as follows. Subunit a, of the mitochondrial membrane ATP synthase complex (F(1)F(0) ATP synthase or Complex V) that produces ATP from ADP in the presence of a proton gradient across the membrane which is generated by electron transport complexes of the respiratory chain. ATP synthase complex consist of a soluble F(1) head domain - the catalytic core - and a membrane F(1) domain - the membrane proton channel. These two domains are linked by a central stalk rotating inside the F(1) region and a stationary peripheral stalk. During catalysis, ATP synthesis in the catalytic domain of F(1) is coupled via a rotary mechanism of the central stalk subunits to proton translocation. With the subunit c (ATP5MC1), forms the proton-conducting channel in the F(0) domain, that contains two crucial half-channels (inlet and outlet) that facilitate proton movement from the mitochondrial intermembrane space (IMS) into the matrix. Protons are taken up via the inlet half-channel and released through the outlet half-channel, following a Grotthuss mechanism. This chain is ATP synthase F(0) complex subunit a, found in Alligator mississippiensis (American alligator).